The following is a 969-amino-acid chain: Squamosa promoter-binding-like protein 6 (969 aa).

Disordered stretches follow at residues 1 to 25 (MEAARVGAQSRHLYGGGLGEPDMDR) and 54 to 81 (EASGLALNSSPSSSEEAGAASVRNVNAR). Residues 55–74 (ASGLALNSSPSSSEEAGAAS) show a composition bias toward low complexity. The SBP-type zinc-finger motif lies at 149-226 (GPACQVEGCT…AGHNRRRRKT (78 aa)). Zn(2+) contacts are provided by cysteine 152, cysteine 157, cysteine 174, histidine 177, cysteine 193, cysteine 196, histidine 200, and cysteine 212. A Bipartite nuclear localization signal motif is present at residues 209–225 (KRSCRRRLAGHNRRRRK). Residues 377 to 434 (GMEGFEDGYEGSPTPAFKTTDSPNCPSWMHQDSTQSPPQTSGNSDSTSAQSLSSSNGD) form a disordered region. Over residues 393–419 (FKTTDSPNCPSWMHQDSTQSPPQTSGN) the composition is skewed to polar residues. The segment covering 420–431 (SDSTSAQSLSSS) has biased composition (low complexity).

Ubiquitous.

Its subcellular location is the nucleus. In terms of biological role, trans-acting factor that binds specifically to the consensus nucleotide sequence 5'-TNCGTACAA-3'. This is Squamosa promoter-binding-like protein 6 (SPL6) from Oryza sativa subsp. japonica (Rice).